The following is a 542-amino-acid chain: Cytochrome P450 monooxygenase TRI1 (542 aa).

Residues 37-54 traverse the membrane as a helical segment; it reads LIYFLCFVVLGRAVQWFL. N-linked (GlcNAc...) asparagine glycosylation is found at Asn167, Asn297, and Asn428. Cys469 contacts heme.

This sequence belongs to the cytochrome P450 family. It depends on heme as a cofactor.

Its subcellular location is the membrane. It functions in the pathway sesquiterpene biosynthesis; trichothecene biosynthesis. Its function is as follows. Cytochrome P450 monooxygenase; part of 2-gene cluster involved in trichothecene C-8 modification that mediates the biosynthesis of T2-toxin. The biosynthesis of trichothecenes begins with the cyclization of farnesyl diphosphate to trichodiene and is catalyzed by the trichodiene synthase TRI5. Trichodiene undergoes a series of oxygenations catalyzed by the cytochrome P450 monooxygenase TRI4. TRI4 controls the addition of four oxygens at C-2, C-3, C-11, and the C-12, C-13-epoxide to form the intermediate isotrichotriol. Isotrichotriol then undergoes a non-enzymatic isomerization and cyclization to form isotrichodermol. During this process, the oxygen at the C-2 position becomes the pyran ring oxygen and the hydroxyl group at C-11 is lost. More complex type A trichothecenes are built by modifying isotrichodermol through a series of paired hydroxylation and acetylation or acylation steps. Isotrichodermol is converted to isotrichodermin by the acetyltransferase TRI101. TRI101 encodes a C-3 transacetylase that acts as a self-protection or resistance factor during biosynthesis and that the presence of a free C-3 hydroxyl group is a key component of Fusarium trichothecene phytotoxicity. A second hydroxyl group is added to C-15 by the trichothecene C-15 hydroxylase TRI11, producing 15-decalonectrin, which is then acetylated by TRI3, producing calonectrin. A third hydroxyl group is added at C-4 by the cytochrome P450 monooxygenase TRI13, converting calonectrin to 3,15-diacetoxyspirpenol, which is subsequently acetylated by the acetyltransferase TRI7. A fourth hydroxyl group is added to C-8 by the cytochrome P450 monooxygenase TRI1, followed by the addition of an isovaleryl moiety by TRI16. Finally, the acetyl group is removed from the C-3 position by the trichothecene C-3 esterase TRI8 to produce T-2 toxin. The sequence is that of Cytochrome P450 monooxygenase TRI1 from Fusarium sporotrichioides.